Consider the following 292-residue polypeptide: Formamidopyrimidine-DNA glycosylase (292 aa).

Pro2 acts as the Schiff-base intermediate with DNA in catalysis. Glu3 acts as the Proton donor in catalysis. Catalysis depends on Lys60, which acts as the Proton donor; for beta-elimination activity. The DNA site is built by His109, Arg128, and Arg173. The FPG-type zinc finger occupies 258–292 (NVYRRTGRECRKCGNLIERQKITGRSTHWCPNCQK). Arg282 acts as the Proton donor; for delta-elimination activity in catalysis.

Belongs to the FPG family. In terms of assembly, monomer. Zn(2+) serves as cofactor.

The catalysed reaction is Hydrolysis of DNA containing ring-opened 7-methylguanine residues, releasing 2,6-diamino-4-hydroxy-5-(N-methyl)formamidopyrimidine.. The enzyme catalyses 2'-deoxyribonucleotide-(2'-deoxyribose 5'-phosphate)-2'-deoxyribonucleotide-DNA = a 3'-end 2'-deoxyribonucleotide-(2,3-dehydro-2,3-deoxyribose 5'-phosphate)-DNA + a 5'-end 5'-phospho-2'-deoxyribonucleoside-DNA + H(+). Its function is as follows. Involved in base excision repair of DNA damaged by oxidation or by mutagenic agents. Acts as a DNA glycosylase that recognizes and removes damaged bases. Has a preference for oxidized purines, such as 7,8-dihydro-8-oxoguanine (8-oxoG). Has AP (apurinic/apyrimidinic) lyase activity and introduces nicks in the DNA strand. Cleaves the DNA backbone by beta-delta elimination to generate a single-strand break at the site of the removed base with both 3'- and 5'-phosphates. The protein is Formamidopyrimidine-DNA glycosylase of Prochlorococcus marinus (strain MIT 9301).